The primary structure comprises 197 residues: ATP synthase subunit delta', mitochondrial (197 aa).

Residues 1–19 (MFRRATSTFLSRASATRRF) constitute a mitochondrion transit peptide.

It belongs to the ATPase epsilon chain family. F-type ATPases have 2 components, CF(1) - the catalytic core - and CF(0) - the membrane proton channel. CF(1) has five subunits: alpha(3), beta(3), gamma(1), delta(1), epsilon(1). CF(0) has three main subunits: a, b and c.

The protein localises to the mitochondrion. The protein resides in the mitochondrion inner membrane. In terms of biological role, mitochondrial membrane ATP synthase (F(1)F(0) ATP synthase or Complex V) produces ATP from ADP in the presence of a proton gradient across the membrane which is generated by electron transport complexes of the respiratory chain. F-type ATPases consist of two structural domains, F(1) - containing the extramembraneous catalytic core, and F(0) - containing the membrane proton channel, linked together by a central stalk and a peripheral stalk. During catalysis, ATP turnover in the catalytic domain of F(1) is coupled via a rotary mechanism of the central stalk subunits to proton translocation. Part of the complex F(1) domain and of the central stalk which is part of the complex rotary element. Rotation of the central stalk against the surrounding alpha(3)beta(3) subunits leads to hydrolysis of ATP in three separate catalytic sites on the beta subunits. This chain is ATP synthase subunit delta', mitochondrial, found in Pisum sativum (Garden pea).